A 314-amino-acid polypeptide reads, in one-letter code: Melanoma-associated antigen 6 (314 aa).

Over residues 1–20 (MPLEQRSQHCKPEEGLEARG) the composition is skewed to basic and acidic residues. Positions 1–99 (MPLEQRSQHC…QEEEGPSTFP (99 aa)) are disordered. Positions 21 to 44 (EALGLVGAQAPATEEQEAASSSST) are enriched in low complexity. The span at 65 to 87 (PQGASSLPTTMNYPLWSQSYEDS) shows a compositional bias: polar residues. Positions 109–308 (LSRKVAKLVH…ISYPLLHEWA (200 aa)) constitute an MAGE domain.

In terms of assembly, interacts with TRIM28. In terms of processing, ubiquitinated by the DCX(DCAF12) complex specifically recognizes the diglutamate (Glu-Glu) at the C-terminus, leading to its degradation. Expressed in many tumors of several types, such as melanoma, head and neck squamous cell carcinoma, lung carcinoma and breast carcinoma, but not in normal tissues except for testes.

Functionally, activator of ubiquitin ligase activity of RING-type zinc finger-containing E3 ubiquitin-protein ligases that acts as a repressor of autophagy. May enhance ubiquitin ligase activity of TRIM28 and stimulate p53/TP53 ubiquitination by TRIM28. Proposed to act through recruitment and/or stabilization of the Ubl-conjugating enzyme (E2) at the E3:substrate complex. May play a role in tumor transformation or aspects of tumor progression. In vitro promotes cell viability in melanoma cell lines. This chain is Melanoma-associated antigen 6, found in Homo sapiens (Human).